A 57-amino-acid chain; its full sequence is MAVPKRRTSKTRKNKRRTHFKISVPGMTECPSCGEYKLSHRVCKNCGSYNGEEVVSK.

This sequence belongs to the bacterial ribosomal protein bL32 family.

The chain is Large ribosomal subunit protein bL32 from Staphylococcus haemolyticus (strain JCSC1435).